A 148-amino-acid chain; its full sequence is Macrodomain Ter protein (148 aa).

Belongs to the MatP family. As to quaternary structure, homodimer.

The protein localises to the cytoplasm. Its function is as follows. Required for spatial organization of the terminus region of the chromosome (Ter macrodomain) during the cell cycle. Prevents early segregation of duplicated Ter macrodomains during cell division. Binds specifically to matS, which is a 13 bp signature motif repeated within the Ter macrodomain. This Pasteurella multocida (strain Pm70) protein is Macrodomain Ter protein.